A 431-amino-acid polypeptide reads, in one-letter code: Enolase (431 aa).

Q166 provides a ligand contact to (2R)-2-phosphoglycerate. Residue E208 is the Proton donor of the active site. Residues D245, E288, and D315 each coordinate Mg(2+). (2R)-2-phosphoglycerate contacts are provided by K340, R369, S370, and K391. The active-site Proton acceptor is the K340.

The protein belongs to the enolase family. Requires Mg(2+) as cofactor.

It localises to the cytoplasm. It is found in the secreted. The protein localises to the cell surface. It catalyses the reaction (2R)-2-phosphoglycerate = phosphoenolpyruvate + H2O. It participates in carbohydrate degradation; glycolysis; pyruvate from D-glyceraldehyde 3-phosphate: step 4/5. Catalyzes the reversible conversion of 2-phosphoglycerate (2-PG) into phosphoenolpyruvate (PEP). It is essential for the degradation of carbohydrates via glycolysis. The protein is Enolase of Clostridium botulinum (strain ATCC 19397 / Type A).